Reading from the N-terminus, the 345-residue chain is GDSL esterase/lipase At1g23500 (345 aa).

The N-terminal stretch at 1–24 is a signal peptide; that stretch reads MNFSLLSTMLMALSSVCLFFVGYA. Catalysis depends on serine 42, which acts as the Nucleophile. Asparagine 103 carries an N-linked (GlcNAc...) asparagine glycan. Active-site residues include aspartate 320 and histidine 323.

It belongs to the 'GDSL' lipolytic enzyme family.

It localises to the secreted. This is GDSL esterase/lipase At1g23500 from Arabidopsis thaliana (Mouse-ear cress).